We begin with the raw amino-acid sequence, 287 residues long: Bifunctional protein FolD (287 aa).

NADP(+) is bound by residues 166-168 (GAS) and Ile232.

Belongs to the tetrahydrofolate dehydrogenase/cyclohydrolase family. As to quaternary structure, homodimer.

It carries out the reaction (6R)-5,10-methylene-5,6,7,8-tetrahydrofolate + NADP(+) = (6R)-5,10-methenyltetrahydrofolate + NADPH. The catalysed reaction is (6R)-5,10-methenyltetrahydrofolate + H2O = (6R)-10-formyltetrahydrofolate + H(+). The protein operates within one-carbon metabolism; tetrahydrofolate interconversion. Its function is as follows. Catalyzes the oxidation of 5,10-methylenetetrahydrofolate to 5,10-methenyltetrahydrofolate and then the hydrolysis of 5,10-methenyltetrahydrofolate to 10-formyltetrahydrofolate. The polypeptide is Bifunctional protein FolD (Buchnera aphidicola subsp. Baizongia pistaciae (strain Bp)).